Consider the following 314-residue polypeptide: Fibrinogen-like protein 1 (314 aa).

The N-terminal stretch at 1–22 (MGKIYSFVLVAIALMMGREGWA) is a signal peptide. A coiled-coil region spans residues 28-62 (CLREQVRLRAQVHQLETRVKQQQTMIAQLLHEKEV). Residues 76-308 (LGGKRQYADC…SVVMKIRPSD (233 aa)) form the Fibrinogen C-terminal domain. 2 cysteine pairs are disulfide-bonded: Cys85-Cys114 and Cys250-Cys263.

Homodimer. Interacts (via the Fibrinogen C-terminal domain) with LAG3 (via Ig-like domains 1 and 2). Mainly expressed in liver. Also expressed in brown adipose tissue.

It localises to the secreted. Immune suppressive molecule that inhibits antigen-specific T-cell activation by acting as a major ligand of LAG3. Responsible for LAG3 T-cell inhibitory function. Binds LAG3 independently from MHC class II (MHC-II). Secreted by, and promotes growth of, hepatocytes. This chain is Fibrinogen-like protein 1 (Fgl1), found in Mus musculus (Mouse).